The following is a 276-amino-acid chain: 28 kDa ribonucleoprotein, chloroplastic (276 aa).

Residues 1-57 constitute a chloroplast transit peptide; it reads MATNGCLISLPPFFTTTKSISSYPFLSTQLKPISLSSSLPTLLSLNKRTTQFPTFVS. RRM domains follow at residues 97 to 175 and 191 to 269; these read AKLF…KAAP and YRIY…AAEE.

Its subcellular location is the plastid. It is found in the chloroplast. Its function is as follows. Probably involved in the 3'-end processing of chloroplast mRNA's. The protein is 28 kDa ribonucleoprotein, chloroplastic of Nicotiana sylvestris (Wood tobacco).